The chain runs to 307 residues: tRNA dimethylallyltransferase (307 aa).

6 to 13 (GATATGKT) is an ATP binding site. Substrate is bound at residue 8-13 (TATGKT). The segment at 31 to 34 (DSMM) is interaction with substrate tRNA.

The protein belongs to the IPP transferase family. In terms of assembly, monomer. It depends on Mg(2+) as a cofactor.

The catalysed reaction is adenosine(37) in tRNA + dimethylallyl diphosphate = N(6)-dimethylallyladenosine(37) in tRNA + diphosphate. Functionally, catalyzes the transfer of a dimethylallyl group onto the adenine at position 37 in tRNAs that read codons beginning with uridine, leading to the formation of N6-(dimethylallyl)adenosine (i(6)A). This Sulfurihydrogenibium sp. (strain YO3AOP1) protein is tRNA dimethylallyltransferase.